We begin with the raw amino-acid sequence, 341 residues long: Killer cell immunoglobulin-like receptor 2DL3 (341 aa).

The first 21 residues, 1 to 21 (MSLMVVSMVCVGFFLLQGAWP), serve as a signal peptide directing secretion. At 22 to 245 (HEGVHRKPSL…SETGNPRHLH (224 aa)) the chain is on the extracellular side. 2 Ig-like C2-type domains span residues 42–107 (EETV…VTHS) and 142–205 (GESV…FRDS). Cystine bridges form between Cys49–Cys100 and Cys149–Cys198. N-linked (GlcNAc...) asparagine glycosylation is found at Asn84, Asn178, and Asn211. The disordered stretch occupies residues 220–239 (VTGNPSNSWPSPTEPSSETG). Low complexity predominate over residues 223-239 (NPSNSWPSPTEPSSETG). The chain crosses the membrane as a helical span at residues 246 to 265 (VLIGTSVVIILFILLLFFLL). Topologically, residues 266-341 (HRWCCNKKNA…VYTELPNAEP (76 aa)) are cytoplasmic.

Belongs to the immunoglobulin superfamily. As to quaternary structure, interacts with ARRB2.

It localises to the cell membrane. Receptor on natural killer (NK) cells for HLA-C alleles (HLA-Cw1, HLA-Cw3 and HLA-Cw7). Inhibits the activity of NK cells thus preventing cell lysis. The sequence is that of Killer cell immunoglobulin-like receptor 2DL3 from Homo sapiens (Human).